The sequence spans 543 residues: Chaperonin GroEL (543 aa).

Residues 29–32 (TLGP), 86–90 (DGTTT), Gly413, 477–479 (DAL), and Asp493 contribute to the ATP site.

The protein belongs to the chaperonin (HSP60) family. In terms of assembly, forms a cylinder of 14 subunits composed of two heptameric rings stacked back-to-back. Interacts with the co-chaperonin GroES.

It localises to the cytoplasm. It carries out the reaction ATP + H2O + a folded polypeptide = ADP + phosphate + an unfolded polypeptide.. Functionally, together with its co-chaperonin GroES, plays an essential role in assisting protein folding. The GroEL-GroES system forms a nano-cage that allows encapsulation of the non-native substrate proteins and provides a physical environment optimized to promote and accelerate protein folding. The chain is Chaperonin GroEL from Clostridium novyi (strain NT).